We begin with the raw amino-acid sequence, 415 residues long: MLRSKGDLVLGCSFCGKKEDERRRIVTGHGVSICNYCVERCAEYLRDRKPSALALMTKEEIPTPLELKAYLDQYVIGQDLAKRVLSVAVYNHYKRVAGRSLDIDSVLIEKSNVLLIGPTGSGKTLLAKTLSQKMKVPFAIADATTLTEAGYVGEDVENILLKLVQNANGDVALAERGIIFIDEIDKISRKSENVSITRDVSGEGVQQALLKIIEGTIASVPPQGGRKHPNQDMLRVDTSNILFICGGAFVGLDGIVGTRVCKNPVGFGADVKTVKERGLQLMHEDVIPDDLVKFGLIPEIIGRLPVTVALDALSKEDLRNILVRPRNAIVRQFEALFALDDVRLVFDEDALDAIAQQAIDQKTGARGLRSIVERLMLDAMFEAPSLKGKKELCITKKVVTQEEKASVRLVSERTA.

The ClpX-type ZB domain occupies 1-53 (MLRSKGDLVLGCSFCGKKEDERRRIVTGHGVSICNYCVERCAEYLRDRKPSAL). Residues C12, C15, C34, and C37 each contribute to the Zn(2+) site. Position 118–125 (118–125 (PTGSGKTL)) interacts with ATP.

Belongs to the ClpX chaperone family. In terms of assembly, component of the ClpX-ClpP complex. Forms a hexameric ring that, in the presence of ATP, binds to fourteen ClpP subunits assembled into a disk-like structure with a central cavity, resembling the structure of eukaryotic proteasomes.

In terms of biological role, ATP-dependent specificity component of the Clp protease. It directs the protease to specific substrates. Can perform chaperone functions in the absence of ClpP. In Treponema pallidum (strain Nichols), this protein is ATP-dependent Clp protease ATP-binding subunit ClpX.